The primary structure comprises 228 residues: Cytochrome c oxidase subunit 2 (228 aa).

Residues 1-14 (MAYPLQLGFQDATS) lie on the Mitochondrial intermembrane side of the membrane. A helical membrane pass occupies residues 15 to 45 (PVMEELLHFHDHTLMIIFLISSLVLYIIMLM). Residues 46 to 59 (LTSKLVHTNMMNVQ) lie on the Mitochondrial matrix side of the membrane. The helical transmembrane segment at 60 to 87 (EMEMIWTILPAIILILIALPSLHTLYMM) threads the bilayer. Topologically, residues 88–228 (DEINNPLLTI…FENWSASLAQ (141 aa)) are mitochondrial intermembrane. Cu cation-binding residues include histidine 161, cysteine 196, glutamate 198, cysteine 200, histidine 204, and methionine 207. Glutamate 198 is a Mg(2+) binding site. Tyrosine 218 carries the phosphotyrosine modification.

The protein belongs to the cytochrome c oxidase subunit 2 family. In terms of assembly, component of the cytochrome c oxidase (complex IV, CIV), a multisubunit enzyme composed of 14 subunits. The complex is composed of a catalytic core of 3 subunits MT-CO1, MT-CO2 and MT-CO3, encoded in the mitochondrial DNA, and 11 supernumerary subunits COX4I, COX5A, COX5B, COX6A, COX6B, COX6C, COX7A, COX7B, COX7C, COX8 and NDUFA4, which are encoded in the nuclear genome. The complex exists as a monomer or a dimer and forms supercomplexes (SCs) in the inner mitochondrial membrane with NADH-ubiquinone oxidoreductase (complex I, CI) and ubiquinol-cytochrome c oxidoreductase (cytochrome b-c1 complex, complex III, CIII), resulting in different assemblies (supercomplex SCI(1)III(2)IV(1) and megacomplex MCI(2)III(2)IV(2)). Found in a complex with TMEM177, COA6, COX18, COX20, SCO1 and SCO2. Interacts with TMEM177 in a COX20-dependent manner. Interacts with COX20. Interacts with COX16. It depends on Cu cation as a cofactor.

The protein resides in the mitochondrion inner membrane. It carries out the reaction 4 Fe(II)-[cytochrome c] + O2 + 8 H(+)(in) = 4 Fe(III)-[cytochrome c] + 2 H2O + 4 H(+)(out). In terms of biological role, component of the cytochrome c oxidase, the last enzyme in the mitochondrial electron transport chain which drives oxidative phosphorylation. The respiratory chain contains 3 multisubunit complexes succinate dehydrogenase (complex II, CII), ubiquinol-cytochrome c oxidoreductase (cytochrome b-c1 complex, complex III, CIII) and cytochrome c oxidase (complex IV, CIV), that cooperate to transfer electrons derived from NADH and succinate to molecular oxygen, creating an electrochemical gradient over the inner membrane that drives transmembrane transport and the ATP synthase. Cytochrome c oxidase is the component of the respiratory chain that catalyzes the reduction of oxygen to water. Electrons originating from reduced cytochrome c in the intermembrane space (IMS) are transferred via the dinuclear copper A center (CU(A)) of subunit 2 and heme A of subunit 1 to the active site in subunit 1, a binuclear center (BNC) formed by heme A3 and copper B (CU(B)). The BNC reduces molecular oxygen to 2 water molecules using 4 electrons from cytochrome c in the IMS and 4 protons from the mitochondrial matrix. This Loxodonta africana (African elephant) protein is Cytochrome c oxidase subunit 2 (MT-CO2).